Consider the following 98-residue polypeptide: Large ribosomal subunit protein uL23 (98 aa).

The protein belongs to the universal ribosomal protein uL23 family. In terms of assembly, part of the 50S ribosomal subunit. Contacts protein L29, and trigger factor when it is bound to the ribosome.

In terms of biological role, one of the early assembly proteins it binds 23S rRNA. One of the proteins that surrounds the polypeptide exit tunnel on the outside of the ribosome. Forms the main docking site for trigger factor binding to the ribosome. This is Large ribosomal subunit protein uL23 from Koribacter versatilis (strain Ellin345).